Here is a 283-residue protein sequence, read N- to C-terminus: Light-independent protochlorophyllide reductase iron-sulfur ATP-binding protein (283 aa).

ATP is bound by residues 15–20 (GIGKST) and Lys-44. Ser-19 contacts Mg(2+). Residues Cys-100 and Cys-134 each coordinate [4Fe-4S] cluster. 185–186 (NR) is a binding site for ATP.

It belongs to the NifH/BchL/ChlL family. Homodimer. Protochlorophyllide reductase is composed of three subunits; ChlL, ChlN and ChlB. It depends on [4Fe-4S] cluster as a cofactor.

It catalyses the reaction chlorophyllide a + oxidized 2[4Fe-4S]-[ferredoxin] + 2 ADP + 2 phosphate = protochlorophyllide a + reduced 2[4Fe-4S]-[ferredoxin] + 2 ATP + 2 H2O. It participates in porphyrin-containing compound metabolism; chlorophyll biosynthesis (light-independent). Its function is as follows. Component of the dark-operative protochlorophyllide reductase (DPOR) that uses Mg-ATP and reduced ferredoxin to reduce ring D of protochlorophyllide (Pchlide) to form chlorophyllide a (Chlide). This reaction is light-independent. The L component serves as a unique electron donor to the NB-component of the complex, and binds Mg-ATP. This is Light-independent protochlorophyllide reductase iron-sulfur ATP-binding protein from Synechococcus sp. (strain JA-3-3Ab) (Cyanobacteria bacterium Yellowstone A-Prime).